A 67-amino-acid chain; its full sequence is Conotoxin Cal6.35 (67 aa).

Residues 1–22 form the signal peptide; it reads MKLTCVLIVAVLILTACQVIAA. Cystine bridges form between cysteine 43–cysteine 53, cysteine 46–cysteine 59, and cysteine 52–cysteine 66.

It belongs to the conotoxin O1 superfamily. In terms of tissue distribution, expressed by the venom duct.

It localises to the secreted. Probable neurotoxin. The polypeptide is Conotoxin Cal6.35 (Californiconus californicus (California cone)).